The primary structure comprises 20 residues: 35 kDa cell wall protein (20 aa).

Its subcellular location is the secreted. It localises to the cell wall. The polypeptide is 35 kDa cell wall protein (Phaseolus vulgaris (Kidney bean)).